We begin with the raw amino-acid sequence, 314 residues long: Mitotic checkpoint protein BUB3.3 (314 aa).

WD repeat units follow at residues 11 to 50, 52 to 90, 92 to 131, 134 to 173, 176 to 215, 229 to 269, and 272 to 311; these read PIED…LSLE, NSQA…VDTI, RHDD…SLVF, DAGG…QSYA, VEVP…SEIK, LDGV…RLNE, and RYSN…QVFI.

The protein belongs to the WD repeat BUB3 family. Part of the mitotic checkpoint complex (MCC).

Its subcellular location is the nucleus. The protein localises to the chromosome. It localises to the centromere. It is found in the kinetochore. The protein resides in the cytoplasm. Its subcellular location is the cytoskeleton. The protein localises to the phragmoplast. It localises to the spindle. In terms of biological role, has a dual function in spindle-assembly checkpoint signaling and in promoting the establishment of correct kinetochore-microtubule (K-MT) attachments. Promotes the formation of stable end-on bipolar attachments. Necessary for kinetochore localization of BUB1. The BUB1/BUB3 complex plays a role in the inhibition of anaphase-promoting complex or cyclosome (APC/C) when spindle-assembly checkpoint is activated and inhibits the ubiquitin ligase activity of APC/C by phosphorylating its activator CDC20. This Arabidopsis thaliana (Mouse-ear cress) protein is Mitotic checkpoint protein BUB3.3 (BUB3.3).